Here is a 161-residue protein sequence, read N- to C-terminus: ATP synthase subunit b 1 (161 aa).

A helical transmembrane segment spans residues 5–25 (PETWVAIAFLLLMGVFAYVGV).

This sequence belongs to the ATPase B chain family. As to quaternary structure, F-type ATPases have 2 components, F(1) - the catalytic core - and F(0) - the membrane proton channel. F(1) has five subunits: alpha(3), beta(3), gamma(1), delta(1), epsilon(1). F(0) has three main subunits: a(1), b(2) and c(10-14). The alpha and beta chains form an alternating ring which encloses part of the gamma chain. F(1) is attached to F(0) by a central stalk formed by the gamma and epsilon chains, while a peripheral stalk is formed by the delta and b chains.

It is found in the cell inner membrane. Functionally, f(1)F(0) ATP synthase produces ATP from ADP in the presence of a proton or sodium gradient. F-type ATPases consist of two structural domains, F(1) containing the extramembraneous catalytic core and F(0) containing the membrane proton channel, linked together by a central stalk and a peripheral stalk. During catalysis, ATP synthesis in the catalytic domain of F(1) is coupled via a rotary mechanism of the central stalk subunits to proton translocation. Component of the F(0) channel, it forms part of the peripheral stalk, linking F(1) to F(0). This Nitrobacter winogradskyi (strain ATCC 25391 / DSM 10237 / CIP 104748 / NCIMB 11846 / Nb-255) protein is ATP synthase subunit b 1.